Reading from the N-terminus, the 338-residue chain is NADPH dehydrogenase (338 aa).

22–25 provides a ligand contact to FMN; sequence SPMC. Tyr27 lines the substrate pocket. Residues Ala59 and Gln101 each coordinate FMN. Residue 163-166 participates in substrate binding; sequence HAAH. FMN-binding positions include Arg214 and 306–307; that span reads GR.

The protein belongs to the NADH:flavin oxidoreductase/NADH oxidase family. NamA subfamily. As to quaternary structure, homotetramer. It depends on FMN as a cofactor.

The enzyme catalyses A + NADPH + H(+) = AH2 + NADP(+). Its function is as follows. Catalyzes the reduction of the double bond of an array of alpha,beta-unsaturated aldehydes and ketones. It also reduces the nitro group of nitroester and nitroaromatic compounds. It could have a role in detoxification processes. The polypeptide is NADPH dehydrogenase (Listeria monocytogenes serovar 1/2a (strain ATCC BAA-679 / EGD-e)).